A 1581-amino-acid polypeptide reads, in one-letter code: Rho guanine nucleotide exchange factor 5 (1581 aa).

Disordered regions lie at residues Glu-25 to His-54, Val-159 to Gln-274, Leu-316 to Ile-643, Ser-659 to Val-700, His-741 to Tyr-810, and Val-829 to Asp-1051. The span at Gln-41–His-54 shows a compositional bias: basic and acidic residues. Residues Lys-204–Leu-221 are compositionally biased toward polar residues. The span at Gly-228–Glu-241 shows a compositional bias: acidic residues. Basic and acidic residues-rich tracts occupy residues Gln-326–Val-336 and Arg-345–Asp-380. A Phosphoserine modification is found at Ser-446. The span at Leu-474–Ile-492 shows a compositional bias: basic and acidic residues. Residues Ser-496–Arg-507 are compositionally biased toward polar residues. A compositionally biased stretch (low complexity) spans Pro-515–Val-531. Composition is skewed to polar residues over residues Thr-569 to Pro-595, Thr-603 to Phe-613, Phe-662 to Ala-685, Thr-748 to Ser-760, and Thr-779 to Pro-791. A compositionally biased stretch (pro residues) spans Val-829–Pro-843. 3 stretches are compositionally biased toward polar residues: residues Pro-867–Arg-881, Gly-889–Val-905, and Ser-912–Thr-925. A phosphoserine mark is found at Ser-953 and Ser-969. The span at Lys-975 to Glu-986 shows a compositional bias: basic and acidic residues. Phosphoserine occurs at positions 1029 and 1110. The DH domain occupies Lys-1158–Asn-1342. Residues Leu-1375–Leu-1488 form the PH domain. The 62-residue stretch at Tyr-1494–Asn-1555 folds into the SH3 domain.

Interacts with SRC. Forms a ternary complex with SRC and the PI3K 85 kDa subunit. Interacts with and is activated by the heterodimer formed by GNB1 and GNG2. Interacts with ODAM (via C-terminus). Interacts with RHOA. In terms of processing, activation of SRC induces tyrosine phosphorylation of ARHGEF5.

The protein localises to the nucleus. It is found in the cytoplasm. It localises to the cell projection. Its subcellular location is the podosome. In terms of biological role, guanine nucleotide exchange factor which activates Rho GTPases. Strongly activates RHOA. Also strongly activates RHOB, weakly activates RHOC and RHOG and shows no effect on RHOD, RHOV, RHOQ or RAC1. Involved in regulation of cell shape and actin cytoskeletal organization. Plays a role in actin organization by generating a loss of actin stress fibers and the formation of membrane ruffles and filopodia. Required for SRC-induced podosome formation. Involved in positive regulation of immature dendritic cell migration. In Mus musculus (Mouse), this protein is Rho guanine nucleotide exchange factor 5.